The chain runs to 200 residues: Small ribosomal subunit protein uS4 (200 aa).

The segment at 22–42 (TGKELEKRPYAPGPHGPNQRK) is disordered. The S4 RNA-binding domain maps to 92–152 (ARLDNLVYRM…EKSNNLVVVK (61 aa)).

The protein belongs to the universal ribosomal protein uS4 family. Part of the 30S ribosomal subunit. Contacts protein S5. The interaction surface between S4 and S5 is involved in control of translational fidelity.

Functionally, one of the primary rRNA binding proteins, it binds directly to 16S rRNA where it nucleates assembly of the body of the 30S subunit. Its function is as follows. With S5 and S12 plays an important role in translational accuracy. The protein is Small ribosomal subunit protein uS4 of Bacillus thuringiensis subsp. konkukian (strain 97-27).